The primary structure comprises 359 residues: Halocin-H4 (359 aa).

An N-terminal signal peptide occupies residues 1–46; sequence MSKDRDGRRTSRRGTLKKIGGFSLGALSFGAVGRTQAATGSSVTTA. Disordered stretches follow at residues 40–59 and 340–359; these read GSSV…DPKS and IPDR…SRKQ.

It is found in the secreted. Functionally, has antibacterial activity against other haloarchaeons. Interacts with the membrane of the target cells where it causes permeability changes that result in an ionic imbalance leading to cell lysis and death. In Haloferax mediterranei (strain ATCC 33500 / DSM 1411 / JCM 8866 / NBRC 14739 / NCIMB 2177 / R-4) (Halobacterium mediterranei), this protein is Halocin-H4 (halH4).